A 260-amino-acid polypeptide reads, in one-letter code: Ribonuclease 3 (260 aa).

The RNase III domain occupies Val16–Gly145. Glu58 provides a ligand contact to Mg(2+). Residue Asp62 is part of the active site. Mg(2+) is bound by residues Asp131 and Glu134. The active site involves Glu134. One can recognise a DRBM domain in the interval Asp172–Glu241. The interval Ala219 to Ala260 is disordered.

The protein belongs to the ribonuclease III family. Homodimer. Mg(2+) is required as a cofactor.

Its subcellular location is the cytoplasm. It carries out the reaction Endonucleolytic cleavage to 5'-phosphomonoester.. Digests double-stranded RNA. Involved in the processing of primary rRNA transcript to yield the immediate precursors to the large and small rRNAs (23S and 16S). Processes some mRNAs, and tRNAs when they are encoded in the rRNA operon. Processes pre-crRNA and tracrRNA of type II CRISPR loci if present in the organism. The sequence is that of Ribonuclease 3 from Myxococcus xanthus (strain DK1622).